A 232-amino-acid polypeptide reads, in one-letter code: Orotidine 5'-phosphate decarboxylase (232 aa).

Residues D16, K38, D65–T74, T119, R180, Q189, G209, and R210 each bind substrate. K67 acts as the Proton donor in catalysis.

The protein belongs to the OMP decarboxylase family. Type 1 subfamily. In terms of assembly, homodimer.

It carries out the reaction orotidine 5'-phosphate + H(+) = UMP + CO2. It participates in pyrimidine metabolism; UMP biosynthesis via de novo pathway; UMP from orotate: step 2/2. Functionally, catalyzes the decarboxylation of orotidine 5'-monophosphate (OMP) to uridine 5'-monophosphate (UMP). The polypeptide is Orotidine 5'-phosphate decarboxylase (Methylorubrum extorquens (strain PA1) (Methylobacterium extorquens)).